Here is a 594-residue protein sequence, read N- to C-terminus: MIMSTPAKNNNGTGLEDVNIPGQAYLREALTSCTDPLKAIESFQLENGVLLPSLRPMLPLLDLHGVRRLDFHTSLMEELRDKLIAHINEMGQKEPRERDKKLKELLVKSFPVVRVKSLRPVVMAILRNTQHIDDKYLKILVRDRELYADTDTEVKRQIWRDNQSLFGDEVSPLLSQYIREKEHILFDHTNLNNLFFHPTPKVRRQGEVVQKLANMIGTSVKLYDMVLQFLRTLFLRTRNVHYCTLRAELLMALHDLEVQEIISIDPCHKFTWCLDACIREKNVDIKRSRELQGFLDNIKRGQEQVLGDLSMTLCDPYAINFLATSAIKILHHLINNEGMPRDNQILILLLRMLALGLSAWVMIDSQDFKEPKLDCQVVTKFLPALMSLMVDDQCRSLHAKLPPDERESALTTIEHSGPAPDAVEAYIQESSVASILAMYYTLHTARLKDRVGVLRVLAILSACKDDRAYEDPFLHSLIALLIPMSEEFATEDFCTTLFDEFIFAGLTRENVTSRHMLKLLWYVHNKLPAGRLATLMKAMQPTTAHNEHIHKLYEILQERIGTGAAETPVIEAPPMEFDSPLKSVPTPGPHYNVQ.

This sequence belongs to the NELF-B family. In terms of assembly, component of the NELF complex. Interacts with Clamp.

The protein resides in the nucleus. It is found in the chromosome. Functionally, essential component of the NELF complex, a complex that negatively regulates the elongation of transcription by RNA polymerase II. The chain is Negative elongation factor B (NELF-B) from Drosophila melanogaster (Fruit fly).